The following is an 82-amino-acid chain: Protein Rv1078A (82 aa).

Basic residues predominate over residues 35–54 (GGPTRRLRRRPAVTRRRRPD). A disordered region spans residues 35–82 (GGPTRRLRRRPAVTRRRRPDRRFVRCRPSPTRRGLPGCWRHSSTGPHT).

The protein resides in the cytoplasm. The protein is Protein Rv1078A of Mycobacterium tuberculosis (strain ATCC 25618 / H37Rv).